A 284-amino-acid chain; its full sequence is Bifunctional protein FolD (284 aa).

Residue Gly166 to Ser168 coordinates NADP(+).

It belongs to the tetrahydrofolate dehydrogenase/cyclohydrolase family. In terms of assembly, homodimer.

It catalyses the reaction (6R)-5,10-methylene-5,6,7,8-tetrahydrofolate + NADP(+) = (6R)-5,10-methenyltetrahydrofolate + NADPH. The catalysed reaction is (6R)-5,10-methenyltetrahydrofolate + H2O = (6R)-10-formyltetrahydrofolate + H(+). The protein operates within one-carbon metabolism; tetrahydrofolate interconversion. Catalyzes the oxidation of 5,10-methylenetetrahydrofolate to 5,10-methenyltetrahydrofolate and then the hydrolysis of 5,10-methenyltetrahydrofolate to 10-formyltetrahydrofolate. The protein is Bifunctional protein FolD of Nitrosococcus oceani (strain ATCC 19707 / BCRC 17464 / JCM 30415 / NCIMB 11848 / C-107).